A 751-amino-acid polypeptide reads, in one-letter code: Photosystem I P700 chlorophyll a apoprotein A1 (751 aa).

The next 8 helical transmembrane spans lie at 73 to 96 (VFSA…FHGA), 159 to 182 (LYST…FHFH), 198 to 222 (LNHH…HVSL), 294 to 312 (TAHH…GHMY), 349 to 372 (WHAQ…HHQY), 388 to 414 (LSLF…IFMI), 436 to 458 (AIIS…LYIH), and 533 to 551 (FLVH…LILL). Positions 575 and 584 each coordinate [4Fe-4S] cluster. A run of 2 helical transmembrane segments spans residues 591–612 (HVFL…HFSW) and 665–687 (LSAY…MFLF). His676 serves as a coordination point for chlorophyll a'. 2 residues coordinate chlorophyll a: Met684 and Tyr692. Residue Trp693 participates in phylloquinone binding. The helical transmembrane segment at 725 to 745 (AVGVAHYLLGGIATTWSFFLA) threads the bilayer.

It belongs to the PsaA/PsaB family. As to quaternary structure, the PsaA/B heterodimer binds the P700 chlorophyll special pair and subsequent electron acceptors. PSI consists of a core antenna complex that captures photons, and an electron transfer chain that converts photonic excitation into a charge separation. The eukaryotic PSI reaction center is composed of at least 11 subunits. Requires P700 is a chlorophyll a/chlorophyll a' dimer, A0 is one or more chlorophyll a, A1 is one or both phylloquinones and FX is a shared 4Fe-4S iron-sulfur center. as cofactor.

The protein localises to the plastid. It localises to the chloroplast thylakoid membrane. The enzyme catalyses reduced [plastocyanin] + hnu + oxidized [2Fe-2S]-[ferredoxin] = oxidized [plastocyanin] + reduced [2Fe-2S]-[ferredoxin]. In terms of biological role, psaA and PsaB bind P700, the primary electron donor of photosystem I (PSI), as well as the electron acceptors A0, A1 and FX. PSI is a plastocyanin/cytochrome c6-ferredoxin oxidoreductase, converting photonic excitation into a charge separation, which transfers an electron from the donor P700 chlorophyll pair to the spectroscopically characterized acceptors A0, A1, FX, FA and FB in turn. Oxidized P700 is reduced on the lumenal side of the thylakoid membrane by plastocyanin or cytochrome c6. This Tupiella akineta (Green alga) protein is Photosystem I P700 chlorophyll a apoprotein A1.